A 521-amino-acid chain; its full sequence is AAA ATPase forming ring-shaped complexes (521 aa).

Residues Thr-4–Gln-44 adopt a coiled-coil conformation. Gly-235–Met-240 is an ATP binding site.

Belongs to the AAA ATPase family. In terms of assembly, homohexamer. Assembles into a hexameric ring structure.

This is AAA ATPase forming ring-shaped complexes from Bifidobacterium longum (strain DJO10A).